We begin with the raw amino-acid sequence, 155 residues long: MYSRQLASCVALALVLLANSAPTSSPAKEAQQYLEQLLLDLQQLLRGINNYKNPKLPMLLTFKFYMPRKATELKHLQCLEEELGPLHDVLNLVQSKNLYLEDAGNFISNIRVTVMKLKGSENTLNCEFDDETVTVVEFLSRWITFCQSAISTMTQ.

Residues 1 to 20 form the signal peptide; the sequence is MYSRQLASCVALALVLLANS. An O-linked (GalNAc...) threonine glycan is attached at Thr23. Cys78 and Cys126 are disulfide-bonded.

This sequence belongs to the IL-2 family.

It is found in the secreted. Its function is as follows. Cytokine produced by activated CD4-positive helper T-cells and to a lesser extend activated CD8-positive T-cells and natural killer (NK) cells that plays pivotal roles in the immune response and tolerance. Binds to a receptor complex composed of either the high-affinity trimeric IL-2R (IL2RA/CD25, IL2RB/CD122 and IL2RG/CD132) or the low-affinity dimeric IL-2R (IL2RB and IL2RG). Interaction with the receptor leads to oligomerization and conformation changes in the IL-2R subunits resulting in downstream signaling starting with phosphorylation of JAK1 and JAK3. In turn, JAK1 and JAK3 phosphorylate the receptor to form a docking site leading to the phosphorylation of several substrates including STAT5. This process leads to activation of several pathways including STAT, phosphoinositide-3-kinase/PI3K and mitogen-activated protein kinase/MAPK pathways. Functions as a T-cell growth factor and can increase NK-cell cytolytic activity as well. Promotes strong proliferation of activated B-cells and subsequently immunoglobulin production. Plays a pivotal role in regulating the adaptive immune system by controlling the survival and proliferation of regulatory T-cells, which are required for the maintenance of immune tolerance. Moreover, participates in the differentiation and homeostasis of effector T-cell subsets, including Th1, Th2, Th17 as well as memory CD8-positive T-cells. The polypeptide is Interleukin-2 (IL2) (Meriones unguiculatus (Mongolian jird)).